The following is a 300-amino-acid chain: tRNA dimethylallyltransferase (300 aa).

9 to 16 (GPTASGKT) contacts ATP. 11-16 (TASGKT) serves as a coordination point for substrate. Positions 34-37 (DSQQ) are interaction with substrate tRNA.

Belongs to the IPP transferase family. In terms of assembly, monomer. Mg(2+) serves as cofactor.

It catalyses the reaction adenosine(37) in tRNA + dimethylallyl diphosphate = N(6)-dimethylallyladenosine(37) in tRNA + diphosphate. Its function is as follows. Catalyzes the transfer of a dimethylallyl group onto the adenine at position 37 in tRNAs that read codons beginning with uridine, leading to the formation of N6-(dimethylallyl)adenosine (i(6)A). The chain is tRNA dimethylallyltransferase from Anaeromyxobacter sp. (strain Fw109-5).